The sequence spans 102 residues: Small ribosomal subunit protein uS10 (102 aa).

Belongs to the universal ribosomal protein uS10 family. In terms of assembly, part of the 30S ribosomal subunit.

Functionally, involved in the binding of tRNA to the ribosomes. This is Small ribosomal subunit protein uS10 from Pyrococcus horikoshii (strain ATCC 700860 / DSM 12428 / JCM 9974 / NBRC 100139 / OT-3).